Reading from the N-terminus, the 282-residue chain is Heme oxygenase 1, chloroplastic (282 aa).

The N-terminal 54 residues, 1 to 54 (MAYLAPISSSLSIFKNPQLSRFQFSSSSPNPLFLRPRIQILSMTMNKSPSLVVV), are a transit peptide targeting the chloroplast. Position 86 (His86) interacts with heme b.

Belongs to the heme oxygenase family. As to expression, widely expressed.

The protein resides in the plastid. It is found in the chloroplast. It carries out the reaction heme b + 3 reduced [NADPH--hemoprotein reductase] + 3 O2 = biliverdin IXalpha + CO + Fe(2+) + 3 oxidized [NADPH--hemoprotein reductase] + 3 H2O + H(+). Its activity is regulated as follows. Activated by ascorbate. In terms of biological role, key enzyme in the synthesis of the chromophore of the phytochrome family of plant photoreceptors. Catalyzes the opening of the heme ring to form the open-chain tetrapyrrole biliverdin IX with the release of iron and carbon monoxide (CO). Produces specifically the biliverdin IX-alpha isomer. Can form complex with heme, is ferredoxin-dependent and its activity is increased in the presence of ascorbate. Plays a role in salt acclimation signaling. May affect the plastid-to-nucleus signaling pathway by perturbing tetrapyrrole synthesis. The plastid-to-nucleus signal plays an important role in the coordinated expression of both nuclear- and chloroplast-localized genes that encode photosynthesis-related proteins. This is Heme oxygenase 1, chloroplastic (HO1) from Arabidopsis thaliana (Mouse-ear cress).